The sequence spans 573 residues: (R)-mandelonitrile lyase 3 (573 aa).

Positions 1–27 (MVKSTMSAVLLVLHIFVLHLQYSEVQS) are cleaved as a signal peptide. An N-linked (GlcNAc...) asparagine glycan is attached at Asn-30. 63–64 (TA) contacts FAD. A glycan (N-linked (GlcNAc...) asparagine) is linked at Asn-75. Residues 82 to 83 (ER), Val-129, Thr-133, and 137 to 140 (NAGV) contribute to the FAD site. Asn-145, Asn-150, Asn-162, and Asn-218 each carry an N-linked (GlcNAc...) asparagine glycan. Val-244 contributes to the FAD binding site. N-linked (GlcNAc...) asparagine glycosylation is found at Asn-252, Asn-267, and Asn-309. Cys-356 is a binding site for substrate. Asn-380, Asn-402, Asn-420, and Asn-467 each carry an N-linked (GlcNAc...) asparagine glycan. An intrachain disulfide couples Cys-427 to Cys-478. Tyr-485 is a binding site for substrate. Residues 486–487 (WH) and Gly-515 contribute to the FAD site. The Proton donor role is filled by His-487. His-525 acts as the Proton acceptor in catalysis. Residue 526 to 527 (PQ) coordinates FAD.

Belongs to the GMC oxidoreductase family. As to quaternary structure, monomer. Requires FAD as cofactor.

The protein resides in the vacuole. It localises to the aleurone grain. It carries out the reaction (R)-mandelonitrile = benzaldehyde + hydrogen cyanide. Its function is as follows. Involved in cyanogenesis, the release of HCN from injured tissues. Catalyzes the stereospecific addition of HCN to a variety of aldehydes in vitro. It is a major seed constituent, and could have the additional role of a storage form for reduced nitrogen. This Prunus serotina (Black cherry) protein is (R)-mandelonitrile lyase 3 (MDL3).